A 176-amino-acid chain; its full sequence is MEKDSQATSSDTSIEKEGVISQSLSKDGIPNQSLSDDHIGIENISVQPSKLYEAVSALRNYGFNYLQCQGGYDEGPGKNLVSFYHFITVDDFQKIEKIKEVRLKVFLKRDSDLSIPSLYEIFKGSDWQERETFDMYGINFIDHPNPKRLLMPEDWRGWPLRKDYIQPDFYELQDAY.

Polar residues-rich tracts occupy residues 1–12 (MEKDSQATSSDT) and 20–30 (ISQSLSKDGIP). Positions 1-30 (MEKDSQATSSDTSIEKEGVISQSLSKDGIP) are disordered.

The protein belongs to the complex I 30 kDa subunit family. As to quaternary structure, NDH-1 can be composed of about 15 different subunits; different subcomplexes with different compositions have been identified which probably have different functions.

Its subcellular location is the cellular thylakoid membrane. The enzyme catalyses a plastoquinone + NADH + (n+1) H(+)(in) = a plastoquinol + NAD(+) + n H(+)(out). It carries out the reaction a plastoquinone + NADPH + (n+1) H(+)(in) = a plastoquinol + NADP(+) + n H(+)(out). In terms of biological role, NDH-1 shuttles electrons from an unknown electron donor, via FMN and iron-sulfur (Fe-S) centers, to quinones in the respiratory and/or the photosynthetic chain. The immediate electron acceptor for the enzyme in this species is believed to be plastoquinone. Couples the redox reaction to proton translocation, and thus conserves the redox energy in a proton gradient. Cyanobacterial NDH-1 also plays a role in inorganic carbon-concentration. The polypeptide is NAD(P)H-quinone oxidoreductase subunit J (Prochlorococcus marinus (strain AS9601)).